Consider the following 57-residue polypeptide: Sperm histone (57 aa).

The disordered stretch occupies residues 1–57 (MARYRRTRTRSRSRRRRRSRRRRSSRRRRYGRSRRSYRSVGRRRRRYGRRRRRRRRY). Position 9 is a phosphothreonine (Thr-9).

It belongs to the protamine P1 family. In terms of tissue distribution, testis.

The protein resides in the nucleus. The protein localises to the chromosome. Functionally, protamines substitute for histones in the chromatin of sperm during the haploid phase of spermatogenesis. They compact sperm DNA into a highly condensed, stable and inactive complex. In Coturnix japonica (Japanese quail), this protein is Sperm histone.